We begin with the raw amino-acid sequence, 197 residues long: Peptide deformylase (197 aa).

Fe cation contacts are provided by C106 and H148. E149 is a catalytic residue. H152 contributes to the Fe cation binding site.

It belongs to the polypeptide deformylase family. It depends on Fe(2+) as a cofactor.

It catalyses the reaction N-terminal N-formyl-L-methionyl-[peptide] + H2O = N-terminal L-methionyl-[peptide] + formate. Removes the formyl group from the N-terminal Met of newly synthesized proteins. Requires at least a dipeptide for an efficient rate of reaction. N-terminal L-methionine is a prerequisite for activity but the enzyme has broad specificity at other positions. In Mycolicibacterium gilvum (strain PYR-GCK) (Mycobacterium gilvum (strain PYR-GCK)), this protein is Peptide deformylase.